A 168-amino-acid chain; its full sequence is Photosystem I assembly protein Ycf3 (168 aa).

TPR repeat units lie at residues 35–68 (AFTY…EIDP), 72–105 (SYIL…NPFL), and 120–153 (GEQA…TPGN).

This sequence belongs to the Ycf3 family.

Its subcellular location is the plastid. The protein resides in the chloroplast thylakoid membrane. Its function is as follows. Essential for the assembly of the photosystem I (PSI) complex. May act as a chaperone-like factor to guide the assembly of the PSI subunits. In Lactuca sativa (Garden lettuce), this protein is Photosystem I assembly protein Ycf3.